The following is a 347-amino-acid chain: DNA-directed RNA polymerase subunit alpha (347 aa).

The tract at residues 1-226 (MLISQRPTLS…ELFGLARELN (226 aa)) is alpha N-terminal domain (alpha-NTD). Residues 241 to 347 (ADHIASFALP…DQDYAETEQL (107 aa)) are alpha C-terminal domain (alpha-CTD).

The protein belongs to the RNA polymerase alpha chain family. Homodimer. The RNAP catalytic core consists of 2 alpha, 1 beta, 1 beta' and 1 omega subunit. When a sigma factor is associated with the core the holoenzyme is formed, which can initiate transcription.

The enzyme catalyses RNA(n) + a ribonucleoside 5'-triphosphate = RNA(n+1) + diphosphate. Functionally, DNA-dependent RNA polymerase catalyzes the transcription of DNA into RNA using the four ribonucleoside triphosphates as substrates. This chain is DNA-directed RNA polymerase subunit alpha, found in Mycobacterium ulcerans (strain Agy99).